The sequence spans 236 residues: Probable fimbrial chaperone EcpE (236 aa).

An N-terminal signal peptide occupies residues 1 to 27; sequence MFRRRGVTLTKALLTVVCMLAAPLTQA.

It belongs to the EcpB/EcpE family.

Functionally, part of the ecpRABCDE operon, which encodes the E.coli common pilus (ECP). ECP is found in both commensal and pathogenic strains and plays a dual role in early-stage biofilm development and host cell recognition. This chain is Probable fimbrial chaperone EcpE (ecpE), found in Escherichia coli O18:K1:H7 (strain IHE3034 / ExPEC).